Reading from the N-terminus, the 440-residue chain is Glycerol-3-phosphate dehydrogenase [NAD(+)], chloroplastic (440 aa).

The transit peptide at 1–47 (MAAAAAATFLPHTPTPRRRLAVAVHSPTRRRLSLVFSGPPDGALSVA) directs the protein to the chloroplast. Residues 57–76 (EEAAAAVSAPRGGGGGGGKE) are disordered. NAD(+) contacts are provided by residues 114 to 119 (GGGSFG), phenylalanine 191, lysine 214, and alanine 248. Lysine 214 is a binding site for substrate. Residue lysine 299 is the Proton acceptor of the active site. NAD(+)-binding residues include arginine 363 and glutamate 389. A substrate-binding site is contributed by 363–364 (RN).

This sequence belongs to the NAD-dependent glycerol-3-phosphate dehydrogenase family.

The protein localises to the plastid. Its subcellular location is the chloroplast. The enzyme catalyses sn-glycerol 3-phosphate + NAD(+) = dihydroxyacetone phosphate + NADH + H(+). The protein operates within membrane lipid metabolism; glycerophospholipid metabolism. Functionally, required to supply glycerol-3-phosphate in the chloroplast for the synthesis of glycerolipids. In Oryza sativa subsp. japonica (Rice), this protein is Glycerol-3-phosphate dehydrogenase [NAD(+)], chloroplastic.